The chain runs to 205 residues: MKFSGLWCWLLLFLSVNVIASDVGELIDQDDEVITQKVFFDIEHGEEKVGRIVIGLYGKVCPKTAKNFYKLSTTTNSKKGFIGSTFHRVIPNFMVQGGDFTDGTGVGGKSIYGDTFPDENFTLKHDRKGRLSMANRGKDTNGSQFFITTTEEASWLDGKHVVFGQVVDGMDVVNYIQHVSRDANDKPLEAVKIAKCGEWTPELSS.

Residues 1–20 (MKFSGLWCWLLLFLSVNVIA) form the signal peptide. One can recognise a PPIase cyclophilin-type domain in the interval 39–198 (FFDIEHGEEK…EAVKIAKCGE (160 aa)).

Belongs to the cyclophilin-type PPIase family. PPIase B subfamily.

The protein localises to the secreted. It catalyses the reaction [protein]-peptidylproline (omega=180) = [protein]-peptidylproline (omega=0). Its activity is regulated as follows. Cyclosporin A (CsA) inhibits CYPB. PPIases accelerate the folding of proteins. It catalyzes the cis-trans isomerization of proline imidic peptide bonds in oligopeptides. The sequence is that of Peptidyl-prolyl cis-trans isomerase B (CPR2) from Saccharomyces cerevisiae (strain ATCC 204508 / S288c) (Baker's yeast).